A 260-amino-acid polypeptide reads, in one-letter code: uncharacterized protein (260 aa).

Residues 1-22 (MGYSKRFALYISILILIVMVAG) form the signal peptide. Cys23 is lipidated: N-palmitoyl cysteine. The S-diacylglycerol cysteine moiety is linked to residue Cys23.

This sequence belongs to the staphylococcal tandem lipoprotein family.

The protein resides in the cell membrane. This is an uncharacterized protein from Staphylococcus aureus (strain N315).